The following is a 376-amino-acid chain: Natterin-2 (376 aa).

The signal sequence occupies residues 1-18; it reads MNLSVLLVTLLLLSWTSA. The propeptide occupies 19-27; that stretch reads EKDLKVRVA.

The protein belongs to the natterin family. In terms of processing, contains 4 disulfide bonds. As to expression, expressed by the venom gland.

The protein localises to the secreted. Its activity is regulated as follows. Inhibited by tissue-kallikrein inhibitor TKI and trasylol. Plasma kallikrein inhibitor PKSI527 and classical inhibitors of serine-, metallo-, thiol- or aspartate-peptidases evokes a minor inhibition of the peptide digestion. Shows nociceptive, edema-inducing and kininogenase activity with release of kallidin from low molecular weight kininogen. The cleavage occurs at Met-Lys bonds. The sequence is that of Natterin-2 from Thalassophryne nattereri (Copper Joe toadfish).